Consider the following 47-residue polypeptide: High light-inducible protein HliC (47 aa).

Topologically, residues 1-14 (MNNENSKFGFTAFA) are cytoplasmic. Residues 15 to 20 (ENWNGR) carry the Chlorophyll-binding motif motif. Residues 15–36 (ENWNGRLAMIGFSSALILELVS) are membrane-embedded. Topologically, residues 37 to 47 (GQGVLHFFGIL) are lumenal, thylakoid.

Belongs to the Hlip family. In terms of assembly, forms heterodimers with both HliA and HliB; these are associated with photosystem II (PSII) assembly intermediates containing CP47 (psbB). In the absence of CP47 (psbB) and HliD, forms a homooligomer in vivo that binds 2 chlorophyll a and 1 beta-carotenoid per monomer. Cofractionates in an approximately 50 kDa fraction the thylakoid membrane with HliD. Associated in vivo with monomeric PSII. Purified in several chlorophyll- and carotenoid-containing complexes, including photosystem II (PSII) assembly intermediate complex RCII* (iD1, D1, D2, PsbE, PsbF, PsbI, Ycf39, Ycf48, HliC and HliD) and the Ycf39-Hlip complex (Ycf39, HliC, HliD and pigments).

The protein localises to the cellular thylakoid membrane. Its function is as follows. Forms a number of heteromers involved in photosystem II (PSII) assembly and/or repair under high light stress. Required for binding of chlorophyll and carotenoids by the Ycf39-Hlip complex. The Ycf39-Hlip complex binds D1 at an early stage of PSII assembly along with Ycf48, ribosomes and ChlG, the last enzyme in chlorophyll biosynthesis; it may be involved in chlorophyll reuse and delivery to D1 in the initial stages of PSII assembly. HliA-HliC and HliB-HliC heterodimers bind chlorophyll and carotenoids in a 1:0.6 ratio. Complexes bind mostly beta-carotenoid, but minor amounts of echinenone and beta-crytoxanthin are also detected. The complexes efficiently quench chlorophyll fluorescence, contributing to photoprotection. Deletion of 4 to 5 members of the Hlip family suggests the proteins are involved in regulation of chlorophyll biosynthesis, in stabilization of chlorophyll-binding proteins and/or in reuse of chlorophylls, and may regulate tetrapyrrole biosynthesis. Might bind chlorophyll and/or carotenoids in association with HliD (called the ScpBE pair). In terms of biological role, the Hlips might regulate tetrapyrrole biosynthesis, maybe at the level of aminolevulinic acid synthesis and probably stabilize PSII assembly intermediates. The polypeptide is High light-inducible protein HliC (hliC) (Synechocystis sp. (strain ATCC 27184 / PCC 6803 / Kazusa)).